The primary structure comprises 148 residues: Snaclec B1 (148 aa).

The first 24 residues, 1–24, serve as a signal peptide directing secretion; sequence MGRIIFVSFGLLVVFLSLSGTGAA. Cystine bridges form between C27/C38, C55/C144, and C121/C136. Residues 34-145 form the C-type lectin domain; that stretch reads YDQHCYKVFD…CRLLGHFVCK (112 aa).

The protein belongs to the snaclec family. In terms of assembly, heterodimer; disulfide-linked. As to expression, expressed by the venom gland.

Its subcellular location is the secreted. Interferes with one step of hemostasis (modulation of platelet aggregation, or coagulation cascade, for example). This Macrovipera lebetinus (Levantine viper) protein is Snaclec B1.